Reading from the N-terminus, the 348-residue chain is Eukaryotic translation initiation factor 3 subunit I (348 aa).

WD repeat units follow at residues 8–49 (GHER…GTFE), 51–91 (HMGT…YTYE), 93–135 (PTPV…PKNQ), 147–186 (DGAKKVTIAGWSAGGKYIIAGHEDGLVSKYDGATGEFIDS), 196–238 (EKIH…KVYK), and 294–333 (GHFGPLNTIAVHPDGTGYASGGEDGFIRLHSFDKSYYDFE).

Belongs to the eIF-3 subunit I family. As to quaternary structure, component of the eukaryotic translation initiation factor 3 (eIF-3) complex.

It localises to the cytoplasm. Component of the eukaryotic translation initiation factor 3 (eIF-3) complex, which is involved in protein synthesis of a specialized repertoire of mRNAs and, together with other initiation factors, stimulates binding of mRNA and methionyl-tRNAi to the 40S ribosome. The eIF-3 complex specifically targets and initiates translation of a subset of mRNAs involved in cell proliferation. This is Eukaryotic translation initiation factor 3 subunit I from Meyerozyma guilliermondii (strain ATCC 6260 / CBS 566 / DSM 6381 / JCM 1539 / NBRC 10279 / NRRL Y-324) (Yeast).